A 293-amino-acid polypeptide reads, in one-letter code: 33 kDa chaperonin (293 aa).

2 cysteine pairs are disulfide-bonded: Cys236-Cys238 and Cys269-Cys272.

It belongs to the HSP33 family. In terms of processing, under oxidizing conditions two disulfide bonds are formed involving the reactive cysteines. Under reducing conditions zinc is bound to the reactive cysteines and the protein is inactive.

It localises to the cytoplasm. Redox regulated molecular chaperone. Protects both thermally unfolding and oxidatively damaged proteins from irreversible aggregation. Plays an important role in the bacterial defense system toward oxidative stress. The protein is 33 kDa chaperonin of Lactobacillus delbrueckii subsp. bulgaricus (strain ATCC 11842 / DSM 20081 / BCRC 10696 / JCM 1002 / NBRC 13953 / NCIMB 11778 / NCTC 12712 / WDCM 00102 / Lb 14).